The chain runs to 1064 residues: Lethal(2) giant larvae protein homolog 1 (1064 aa).

WD repeat units follow at residues 38 to 71 (SALAFDPELRIMAIGTRSGAVKIYGAPGVEFTGL), 78 to 119 (VTQM…ALSF), 139 to 176 (VTVVLLVAASDIAALGTEGSSVFFLDVTTLTLLEGQTL), 200 to 234 (SLQGHLRDPTKILIGYSRGLLVIWNQASQCVDHIF), 240 to 272 (LESLCWGRDSSTVVSSHSDGSYAVWSVDAGSFP), 290 to 332 (AINK…ETLV), 340 to 374 (IIDFFTVHSTRPEDEFDDPQALAVLLEEELVVLDL), 396 to 474 (TCSA…YKLS), 518 to 593 (QKVA…RVLV), 602 to 663 (TAVT…LRQS), 723 to 783 (VRCL…KEVQ), 792 to 844 (AIAV…VSAK), 849 to 902 (LTAH…VHYS), and 916 to 939 (VFTRHGQGFYLISPSEFERFSLSA). Ser-663 carries the post-translational modification Phosphoserine. At Thr-958 the chain carries Phosphothreonine. The interval 966-1010 (ESPKLSQANGTPSILLAPQSLDGSPDPAHSMGPDTPEPPEAALSP) is disordered. 2 positions are modified to phosphoserine: Ser-967 and Ser-985.

It belongs to the WD repeat L(2)GL family. As to quaternary structure, associated with nonmuscle myosin II heavy chain. Interacts with PRKCI/aPKC, PARD6B/Par-6 and PARD6A. Interacts with STX4A. Interacts with RAB10 (GDP-bound form); the interaction is direct and promotes RAB10 association with membranes and activation through competition with the Rab inhibitor GDI1. Interacts with DCAF1. In terms of processing, phosphorylated at least at Ser-663 by PRKCI. Expressed in brain, kidney, and muscle but is barely seen in heart and placenta. Down-regulated or lost in all cell lines and in most of the tumor samples analyzed. Loss was associated with advanced stage of the disease.

The protein localises to the early endosome membrane. It localises to the golgi apparatus. It is found in the trans-Golgi network membrane. The protein resides in the golgi apparatus membrane. Its subcellular location is the cell projection. The protein localises to the axon. It localises to the cytoplasm. It is found in the cytoskeleton. Cortical cytoskeleton protein found in a complex involved in maintaining cell polarity and epithelial integrity. Involved in the regulation of mitotic spindle orientation, proliferation, differentiation and tissue organization of neuroepithelial cells. Involved in axonogenesis through RAB10 activation thereby regulating vesicular membrane trafficking toward the axonal plasma membrane. This is Lethal(2) giant larvae protein homolog 1 (LLGL1) from Homo sapiens (Human).